Reading from the N-terminus, the 637-residue chain is Sodium-dependent proline transporter (637 aa).

Residues 1 to 45 (MKKLQEAHLRKPITPDLLMTPSDQGDVDLDVDFAADRGNWTGKLD) lie on the Cytoplasmic side of the membrane. Thr-20 is modified (phosphothreonine). Ser-22 carries the phosphoserine modification. The next 3 helical transmembrane spans lie at 46–66 (FLLSCIGYCVGLGNVWRFPYR), 74–93 (AFLVPYFLMLAICGIPLFFL), and 117–137 (GAGAAMLLIVGLVAIYYNMII). Residues 138–214 (AYVLFYLFAS…QGIGRPGEIR (77 aa)) lie on the Extracellular side of the membrane. The N-linked (GlcNAc...) asparagine glycan is linked to Asn-182. The next 9 helical transmembrane spans lie at 215-233 (WNLCLCLLLAWVIVFLCIL), 242-259 (VVYFTATFPYLILLMLLV), 295-312 (IFYSLGVGFGGLLTFASY), 324-345 (FIVTLGNAITSILAGFAIFSVL), 378-397 (LPLSPFWSFLFFFMLLTLGL), 425-443 (VFSGLICVAMYLMGLILTT), 459-479 (SFGLMVVVITTCLAVTRVYGI), 500-519 (ACWLFLSPATLLALLVYSIV), and 538-556 (LGILMGLLSCLMIPAGMLV). Residues 557-637 (AVLREEGSLW…IAEEEEESMM (81 aa)) are Cytoplasmic-facing. 2 positions are modified to phosphoserine: Ser-573 and Ser-582. A Phosphothreonine modification is found at Thr-588. Tyr-591 carries the phosphotyrosine modification. A phosphoserine mark is found at Ser-598 and Ser-600.

This sequence belongs to the sodium:neurotransmitter symporter (SNF) (TC 2.A.22) family. SLC6A7 subfamily.

Its subcellular location is the synaptic cell membrane. It carries out the reaction L-proline(out) + chloride(out) + 2 Na(+)(out) = L-proline(in) + chloride(in) + 2 Na(+)(in). The catalysed reaction is L-pipecolate(out) + chloride(out) + 2 Na(+)(out) = L-pipecolate(in) + chloride(in) + 2 Na(+)(in). Functionally, brain specific sodium (and chloride)-dependent proline transporter. Terminates the action of proline by its high affinity sodium-dependent reuptake into presynaptic terminals. This chain is Sodium-dependent proline transporter, found in Mus musculus (Mouse).